A 240-amino-acid chain; its full sequence is Adenosylcobinamide-GDP ribazoletransferase (240 aa).

The next 5 membrane-spanning stretches (helical) occupy residues 31–51 (LLYY…ASHL), 62–81 (ALLL…DGLA), 109–129 (IAVV…WVLV), 133–153 (IGAQ…GLFL), and 179–199 (VLLV…LLAL).

Belongs to the CobS family. Mg(2+) serves as cofactor.

The protein resides in the cell inner membrane. It catalyses the reaction alpha-ribazole + adenosylcob(III)inamide-GDP = adenosylcob(III)alamin + GMP + H(+). It carries out the reaction alpha-ribazole 5'-phosphate + adenosylcob(III)inamide-GDP = adenosylcob(III)alamin 5'-phosphate + GMP + H(+). It functions in the pathway cofactor biosynthesis; adenosylcobalamin biosynthesis; adenosylcobalamin from cob(II)yrinate a,c-diamide: step 7/7. In terms of biological role, joins adenosylcobinamide-GDP and alpha-ribazole to generate adenosylcobalamin (Ado-cobalamin). Also synthesizes adenosylcobalamin 5'-phosphate from adenosylcobinamide-GDP and alpha-ribazole 5'-phosphate. This Pseudomonas putida (strain ATCC 47054 / DSM 6125 / CFBP 8728 / NCIMB 11950 / KT2440) protein is Adenosylcobinamide-GDP ribazoletransferase.